A 185-amino-acid chain; its full sequence is Hypoxanthine/guanine phosphoribosyltransferase (185 aa).

It belongs to the purine/pyrimidine phosphoribosyltransferase family. Archaeal HPRT subfamily. In terms of assembly, homodimer.

The protein resides in the cytoplasm. The catalysed reaction is IMP + diphosphate = hypoxanthine + 5-phospho-alpha-D-ribose 1-diphosphate. It carries out the reaction GMP + diphosphate = guanine + 5-phospho-alpha-D-ribose 1-diphosphate. The protein operates within purine metabolism; IMP biosynthesis via salvage pathway; IMP from hypoxanthine: step 1/1. Catalyzes a salvage reaction resulting in the formation of IMP that is energically less costly than de novo synthesis. This chain is Hypoxanthine/guanine phosphoribosyltransferase, found in Methanococcus maripaludis (strain C7 / ATCC BAA-1331).